A 214-amino-acid polypeptide reads, in one-letter code: tRNA (guanine-N(7)-)-methyltransferase (214 aa).

S-adenosyl-L-methionine is bound by residues glutamate 43, glutamate 68, aspartate 95, and aspartate 117. Residue aspartate 117 is part of the active site. Residues lysine 121, aspartate 153, and 190–193 each bind substrate; that span reads TEYE.

Belongs to the class I-like SAM-binding methyltransferase superfamily. TrmB family.

It carries out the reaction guanosine(46) in tRNA + S-adenosyl-L-methionine = N(7)-methylguanosine(46) in tRNA + S-adenosyl-L-homocysteine. The protein operates within tRNA modification; N(7)-methylguanine-tRNA biosynthesis. Functionally, catalyzes the formation of N(7)-methylguanine at position 46 (m7G46) in tRNA. The polypeptide is tRNA (guanine-N(7)-)-methyltransferase (Staphylococcus aureus (strain COL)).